Consider the following 279-residue polypeptide: Urease accessory protein UreD (279 aa).

The protein belongs to the UreD family. UreD, UreF and UreG form a complex that acts as a GTP-hydrolysis-dependent molecular chaperone, activating the urease apoprotein by helping to assemble the nickel containing metallocenter of UreC. The UreE protein probably delivers the nickel.

It localises to the cytoplasm. Its function is as follows. Required for maturation of urease via the functional incorporation of the urease nickel metallocenter. This is Urease accessory protein UreD from Nostoc sp. (strain PCC 7120 / SAG 25.82 / UTEX 2576).